Here is a 224-residue protein sequence, read N- to C-terminus: Ras-related protein Rab-32C (224 aa).

Positions 1–22 (MYSNKNDKDKDKDQNNENNKNN) are disordered. Residue 35–42 (GKLACGKT) participates in GTP binding. Residues 57-65 (YKPTIGVDF) carry the Effector region motif. GTP contacts are provided by residues 83 to 87 (DIAGQ) and 142 to 145 (NKCD). The tract at residues 203–224 (GFKLSDQSQSTETTPTQSKTCC) is disordered. A compositionally biased stretch (low complexity) spans 209–224 (QSQSTETTPTQSKTCC). Residues Cys223 and Cys224 are each lipidated (S-geranylgeranyl cysteine).

It belongs to the small GTPase superfamily. Rab family.

The protein is Ras-related protein Rab-32C (rab32C) of Dictyostelium discoideum (Social amoeba).